Consider the following 188-residue polypeptide: UPF0200 protein M164_1169 (188 aa).

15-22 serves as a coordination point for ATP; it reads GMPGSGKS.

This sequence belongs to the UPF0200 family.

The polypeptide is UPF0200 protein M164_1169 (Saccharolobus islandicus (strain M.16.4 / Kamchatka #3) (Sulfolobus islandicus)).